A 671-amino-acid chain; its full sequence is MSLVKERKPKKPHYIPRPPGKPFKYKCFQCPFTCNEKSHLFNHMKYGLCKNSITVVTDQDRIVKNPKVNSTDQKQPSNEPFAKSPVPAINGLTGLESKTQHSVAREEAKENFDLKNEAKPHVEKTTVTKEVTLPPTAIIGQINKPPSLDGVMRPSAFIPVGEHRLKGTENIKIPELSSVSTEPAKGVHSIKSAFHSLPTPWKSGLVSPDFSHKSSIPRYIRPMISEYPPQFYSETGLPAVFSPYLFPQAECENPMLSVYSAPEQRPFLPHPLQASGLPLPKPINAPFEHYRLLQQFQQNPQLHYGFYRPTEHPYFSYGLKVPPVPSLSKEHTSQSVDSPTFIYPSSHPSRLYPLEGFQKLAEIQKETSPVPAKNLDSKSDSESVKMSPRAGSAATGSPGRPSPTNFTQNSQGHEGIFDLSTKSTSDKAGKDFTSGKAVRKSTDCQTTISREHSPCFRNDEIQSHSDCYSDDAAPHDSVAPLNLSKRPEVEDRAVFDTMHNSDSNDESVGFMEIQDLPLNLSVKDSGNNQKALCADERLLLPRQVTSSPNYHFIHTVDKRVPATTGVHSLGIIENCDEQKQSAAVALCQLATSSPGVPARGTEDEFSEKETVAPEQVHPRAPAAQETEADIGARGQKRTNSKEPGKSQSSNKKHKSVDSGRMFTLRKRPRVS.

Residues Tyr-25–Asn-51 form a CCHC-type zinc finger. 4 residues coordinate Zn(2+): Cys-27, Cys-30, His-43, and Cys-49. Disordered regions lie at residues Pro-66 to Pro-87, Glu-366 to Thr-433, and Ser-592 to Ser-671. Composition is skewed to polar residues over residues Lys-67–Asn-78 and Ser-402–Gly-412.

It is found in the nucleus. In terms of biological role, transcription factor involved in epidermis differentiation. This Xenopus tropicalis (Western clawed frog) protein is Zinc finger protein 750 (znf750).